The sequence spans 332 residues: Glycerol-3-phosphate dehydrogenase [NAD(P)+] (332 aa).

Residues Trp-13, Lys-34, and Lys-108 each coordinate NADPH. 3 residues coordinate sn-glycerol 3-phosphate: Lys-108, Gly-136, and Ser-138. Ala-140 lines the NADPH pocket. Positions 191, 244, 254, 255, and 256 each coordinate sn-glycerol 3-phosphate. Lys-191 serves as the catalytic Proton acceptor. Arg-255 contributes to the NADPH binding site. The NADPH site is built by Val-279 and Glu-281.

It belongs to the NAD-dependent glycerol-3-phosphate dehydrogenase family.

The protein localises to the cytoplasm. The catalysed reaction is sn-glycerol 3-phosphate + NAD(+) = dihydroxyacetone phosphate + NADH + H(+). It carries out the reaction sn-glycerol 3-phosphate + NADP(+) = dihydroxyacetone phosphate + NADPH + H(+). It participates in membrane lipid metabolism; glycerophospholipid metabolism. Catalyzes the reduction of the glycolytic intermediate dihydroxyacetone phosphate (DHAP) to sn-glycerol 3-phosphate (G3P), the key precursor for phospholipid synthesis. The protein is Glycerol-3-phosphate dehydrogenase [NAD(P)+] of Francisella tularensis subsp. novicida (strain U112).